Consider the following 292-residue polypeptide: Pyridoxal 5'-phosphate synthase subunit PdxS (292 aa).

Asp22 is a binding site for D-ribose 5-phosphate. The active-site Schiff-base intermediate with D-ribose 5-phosphate is Lys79. Gly151 contributes to the D-ribose 5-phosphate binding site. Residue Arg163 coordinates D-glyceraldehyde 3-phosphate. D-ribose 5-phosphate contacts are provided by residues Gly212 and 233–234 (GS).

Belongs to the PdxS/SNZ family. In terms of assembly, in the presence of PdxT, forms a dodecamer of heterodimers.

It catalyses the reaction aldehydo-D-ribose 5-phosphate + D-glyceraldehyde 3-phosphate + L-glutamine = pyridoxal 5'-phosphate + L-glutamate + phosphate + 3 H2O + H(+). Its pathway is cofactor biosynthesis; pyridoxal 5'-phosphate biosynthesis. Its function is as follows. Catalyzes the formation of pyridoxal 5'-phosphate from ribose 5-phosphate (RBP), glyceraldehyde 3-phosphate (G3P) and ammonia. The ammonia is provided by the PdxT subunit. Can also use ribulose 5-phosphate and dihydroxyacetone phosphate as substrates, resulting from enzyme-catalyzed isomerization of RBP and G3P, respectively. The sequence is that of Pyridoxal 5'-phosphate synthase subunit PdxS from Thermoanaerobacter pseudethanolicus (strain ATCC 33223 / 39E) (Clostridium thermohydrosulfuricum).